The chain runs to 382 residues: Threonine synthase (382 aa).

K93 bears the N6-(pyridoxal phosphate)lysine mark. Residues N119, 219-223 (GNAGN), and T347 contribute to the pyridoxal 5'-phosphate site.

The protein belongs to the threonine synthase family. Requires pyridoxal 5'-phosphate as cofactor.

It catalyses the reaction O-phospho-L-homoserine + H2O = L-threonine + phosphate. The protein operates within amino-acid biosynthesis; L-threonine biosynthesis; L-threonine from L-aspartate: step 5/5. Its function is as follows. Catalyzes the gamma-elimination of phosphate from L-phosphohomoserine and the beta-addition of water to produce L-threonine. This is Threonine synthase (thrC) from Synechocystis sp. (strain ATCC 27184 / PCC 6803 / Kazusa).